The following is a 287-amino-acid chain: F420-non-reducing hydrogenase vhu subunit G (287 aa).

Belongs to the [NiFe]/[NiFeSe] hydrogenase small subunit family. In terms of assembly, the F420-non-reducing hydrogenase vhu is composed of four subunits; VhuA, VhuD, VhuG and VhuU.

This chain is F420-non-reducing hydrogenase vhu subunit G (vhuG), found in Methanococcus voltae.